Reading from the N-terminus, the 80-residue chain is Serine rich endogenous peptide 15 (80 aa).

The first 28 residues, 1–28 (MSKEKSYVIALLLSLLLCLSFQVGVSEA), serve as a signal peptide directing secretion. 2 consecutive short sequence motifs (SCOOP motif) follow at residues 32–46 (AVTT…CANG) and 66–80 (PRVA…GKGP). Residues 37 to 80 (YSDSPRCANGSSASPPTRHCPRGRPRPPTPRVAVHSNSTKGKGP) form a disordered region. 2 short sequence motifs (sxS motif essential for MIK2 binding) span residues 38–40 (SDS) and 72–74 (SNS). A compositionally biased stretch (polar residues) spans 71–80 (HSNSTKGKGP).

Belongs to the serine rich endogenous peptide (SCOOP) phytocytokine family. In terms of assembly, interacts with MIK2 (via extracellular leucine-rich repeat domain); this interaction triggers the formation of complex between MIK2 and the BAK1/SERK3 and SERK4 coreceptors, and subsequent BAK1 activation by phosphorylation. As to expression, mostly expressed in leaves, and, to a lower extent, in seedlings shoots, roots, stems, siliques, seeds and flowers.

It is found in the cell membrane. The protein localises to the secreted. Its subcellular location is the extracellular space. The protein resides in the apoplast. It localises to the endoplasmic reticulum. It is found in the golgi apparatus. Functionally, brassicaceae-specific phytocytokine (plant endogenous peptide released into the apoplast) perceived by MIK2 in a BAK1/SERK3 and SERK4 coreceptors-dependent manner, that modulates various physiological and antimicrobial processes including growth prevention and reactive oxygen species (ROS) response regulation. Inhibits root growth. This chain is Serine rich endogenous peptide 15, found in Arabidopsis thaliana (Mouse-ear cress).